A 1315-amino-acid chain; its full sequence is Myopalladin (1315 aa).

4 disordered regions span residues 19–60 (SYLA…DLPD), 81–145 (INHD…TQSK), 166–204 (HSSK…TERR), and 230–266 (EAKR…LGQP). Basic and acidic residues-rich tracts occupy residues 23 to 35 (ETRH…RSRA) and 84 to 104 (DPLE…DQTK). 2 positions are modified to phosphoserine: S99 and S129. The segment covering 166-180 (HSSKRIRPRACKNHK) has biased composition (basic residues). The span at 184–199 (ESQNKVLQENSPTFSD) shows a compositional bias: polar residues. A coiled-coil region spans residues 219 to 240 (DNELNHAIEQREAKRREAELAA). T249 bears the Phosphothreonine mark. The region spanning 267-357 (PRFTQKLRSR…DSTSAEIYIE (91 aa)) is the Ig-like 1 domain. C288 and C339 are joined by a disulfide. The disordered stretch occupies residues 359–392 (VSSSDSEGDPNKEEMNRIQKPNEVSSPPTTSAAI). The Ig-like 2 domain maps to 432–528 (PVFTKMLQNL…GTVSSIAQLD (97 aa)). The cysteines at positions 453 and 512 are disulfide-linked. 3 disordered regions span residues 535 to 652 (ISDN…VLAK), 674 to 704 (LQNT…SSKQ), and 725 to 747 (SSTS…NTPQ). Positions 609–623 (SSGSGAANTSQTRPN) are enriched in polar residues. S641 is modified (phosphoserine). The span at 725-741 (SSTSTATVSPSSSPVFT) shows a compositional bias: low complexity. The residue at position 754 (S754) is a Phosphoserine. 2 disordered regions span residues 762-814 (HPST…TPVS) and 840-865 (NAMG…KAPQ). Positions 779–790 (PAPPSPAEPAAP) are enriched in pro residues. 2 positions are modified to phosphoserine: S809 and S814. S903 and S924 each carry phosphoserine. Ig-like domains lie at 941 to 1025 (PIFD…GRIS), 1068 to 1157 (PHFL…LELT), and 1167 to 1257 (PVIL…ARLD). Cysteines 1089 and 1141 form a disulfide.

The protein belongs to the myotilin/palladin family. As to quaternary structure, interacts with TTN/titin, NEB, NEBL, ACTN2 and CARP.

It is found in the cytoplasm. The protein localises to the nucleus. The protein resides in the myofibril. It localises to the sarcomere. Its subcellular location is the z line. Component of the sarcomere that tethers together nebulin (skeletal muscle) and nebulette (cardiac muscle) to alpha-actinin, at the Z lines. This chain is Myopalladin (Mypn), found in Mus musculus (Mouse).